A 58-amino-acid polypeptide reads, in one-letter code: UPF0391 membrane protein VP0082 (58 aa).

The next 2 membrane-spanning stretches (helical) occupy residues 4-24 and 30-50; these read WMFIFLALALVSAVLGFSGIA and VAQVIFYLFLLSLIVSIVFVI.

This sequence belongs to the UPF0391 family.

It is found in the cell membrane. This is UPF0391 membrane protein VP0082 from Vibrio parahaemolyticus serotype O3:K6 (strain RIMD 2210633).